The primary structure comprises 358 residues: Chorismate synthase (358 aa).

Residue Arg-48 coordinates NADP(+). FMN contacts are provided by residues 125 to 127 (RAS), Ser-277, 292 to 296 (KPIPS), and Arg-318.

Belongs to the chorismate synthase family. Homotetramer. FMNH2 serves as cofactor.

The catalysed reaction is 5-O-(1-carboxyvinyl)-3-phosphoshikimate = chorismate + phosphate. It functions in the pathway metabolic intermediate biosynthesis; chorismate biosynthesis; chorismate from D-erythrose 4-phosphate and phosphoenolpyruvate: step 7/7. Functionally, catalyzes the anti-1,4-elimination of the C-3 phosphate and the C-6 proR hydrogen from 5-enolpyruvylshikimate-3-phosphate (EPSP) to yield chorismate, which is the branch point compound that serves as the starting substrate for the three terminal pathways of aromatic amino acid biosynthesis. This reaction introduces a second double bond into the aromatic ring system. The chain is Chorismate synthase from Desulfatibacillum aliphaticivorans.